The chain runs to 774 residues: Lysyl oxidase homolog 2 (774 aa).

The first 25 residues, 1 to 25 (MERRGSSCLCRCLALLALLPTLSLA), serve as a signal peptide directing secretion. SRCR domains follow at residues 58-159 (LRLA…VVCS), 188-302 (IRAI…VSCV), 326-425 (VRLR…VRCN), and 435-544 (LRLN…VACS). Disulfide bonds link cysteine 84-cysteine 148, cysteine 97-cysteine 158, cysteine 128-cysteine 138, cysteine 218-cysteine 291, cysteine 231-cysteine 301, cysteine 265-cysteine 275, cysteine 351-cysteine 414, cysteine 364-cysteine 424, and cysteine 395-cysteine 405. Asparagine 288 is a glycosylation site (N-linked (GlcNAc...) asparagine). N-linked (GlcNAc...) asparagine glycosylation occurs at asparagine 455. 3 disulfides stabilise this stretch: cysteine 464-cysteine 530, cysteine 477-cysteine 543, and cysteine 511-cysteine 521. The lysyl-oxidase like stretch occupies residues 548 to 751 (PDLVLNAEIV…WMYNCHIGGS (204 aa)). Ca(2+)-binding residues include aspartate 549 and leucine 550. Disulfide bonds link cysteine 573-cysteine 625, cysteine 579-cysteine 695, cysteine 657-cysteine 673, and cysteine 663-cysteine 685. 3 residues coordinate Cu cation: histidine 626, histidine 628, and histidine 630. Asparagine 644 carries an N-linked (GlcNAc...) asparagine glycan. A cross-link (lysine tyrosylquinone (Lys-Tyr)) is located at residues 653–689 (KASFCLEDTECEGDIQKSYECANFGEQGITMGCWDMY). Tyrosine 689 is subject to 2',4',5'-topaquinone. 4 residues coordinate Ca(2+): glutamate 722, aspartate 724, asparagine 727, and asparagine 728. Residues cysteine 732 and cysteine 746 are joined by a disulfide bond.

It belongs to the lysyl oxidase family. As to quaternary structure, component of some chromatin repressor complex. Interacts with SNAI1. Interacts with TAF10. Interacts with HSPA5. Interacts with EFEMP2. Cu cation is required as a cofactor. It depends on lysine tyrosylquinone residue as a cofactor. Post-translationally, the lysine tyrosylquinone cross-link (LTQ) is generated by condensation of the epsilon-amino group of a lysine with a topaquinone produced by oxidation of tyrosine. N-glycosylated. N-glycosylation on Asn-455 and Asn-644 may be essential for proper folding and secretion; may be composed of a fucosylated carbohydrates attached to a trimannose N-linked glycan core.

The protein resides in the secreted. It localises to the extracellular space. It is found in the extracellular matrix. The protein localises to the basement membrane. Its subcellular location is the nucleus. The protein resides in the chromosome. It localises to the endoplasmic reticulum. The catalysed reaction is L-lysyl-[protein] + O2 + H2O = (S)-2-amino-6-oxohexanoyl-[protein] + H2O2 + NH4(+). Its activity is regulated as follows. Specifically inhibited by a mouse monoclonal antibody AB0023, inhibition occurs in a non-competitive manner. Mediates the post-translational oxidative deamination of lysine residues on target proteins leading to the formation of deaminated lysine (allysine). Acts as a transcription corepressor and specifically mediates deamination of trimethylated 'Lys-4' of histone H3 (H3K4me3), a specific tag for epigenetic transcriptional activation. Shows no activity against histone H3 when it is trimethylated on 'Lys-9' (H3K9me3) or 'Lys-27' (H3K27me3) or when 'Lys-4' is monomethylated (H3K4me1) or dimethylated (H3K4me2). Also mediates deamination of methylated TAF10, a member of the transcription factor IID (TFIID) complex, which induces release of TAF10 from promoters, leading to inhibition of TFIID-dependent transcription. LOXL2-mediated deamination of TAF10 results in transcriptional repression of genes required for embryonic stem cell pluripotency including POU5F1/OCT4, NANOG, KLF4 and SOX2. Involved in epithelial to mesenchymal transition (EMT) via interaction with SNAI1 and participates in repression of E-cadherin CDH1, probably by mediating deamination of histone H3. During EMT, involved with SNAI1 in negatively regulating pericentromeric heterochromatin transcription. SNAI1 recruits LOXL2 to pericentromeric regions to oxidize histone H3 and repress transcription which leads to release of heterochromatin component CBX5/HP1A, enabling chromatin reorganization and acquisition of mesenchymal traits. Interacts with the endoplasmic reticulum protein HSPA5 which activates the IRE1-XBP1 pathway of the unfolded protein response, leading to expression of several transcription factors involved in EMT and subsequent EMT induction. When secreted into the extracellular matrix, promotes cross-linking of extracellular matrix proteins by mediating oxidative deamination of peptidyl lysine residues in precursors to fibrous collagen and elastin. Acts as a regulator of sprouting angiogenesis, probably via collagen IV scaffolding. Acts as a regulator of chondrocyte differentiation, probably by regulating expression of factors that control chondrocyte differentiation. The protein is Lysyl oxidase homolog 2 (LOXL2) of Bos taurus (Bovine).